The sequence spans 837 residues: A disintegrin and metalloproteinase with thrombospondin motifs 4 (837 aa).

The N-terminal stretch at 1–51 is a signal peptide; sequence MSQTGSHPGRGLAGRWLWGAQPCLLLPIVPLSWLVWLLLLLLASLLPSARL. Positions 52–212 are excised as a propeptide; sequence ASPLPREEEI…PSPRPRRAKR (161 aa). The N-linked (GlcNAc...) asparagine glycan is linked to N68. The disordered stretch occupies residues 166–191; it reads EGGTPNSAGGPGAHILRRKSPASGQG. Positions 192-199 match the Cysteine switch motif; that stretch reads PMCNVKAP. C194 serves as a coordination point for Zn(2+). Residues 218–428 form the Peptidase M12B domain; that stretch reads RFVETLVVAD…GYGHCLLDKP (211 aa). Cystine bridges form between C293/C345, C322/C327, C339/C423, C377/C407, C449/C472, C460/C482, C467/C501, C495/C506, C532/C569, C536/C574, and C547/C559. Position 361 (H361) interacts with Zn(2+). E362 is a catalytic residue. 2 residues coordinate Zn(2+): H365 and H371. A Disintegrin domain is found at 437–519; the sequence is TFPGKDYDAD…DQLQDFNIPQ (83 aa). The 56-residue stretch at 520-575 folds into the TSP type-1 domain; sequence AGGWGPWGPWGDCSRTCGGGVQFSSRDCTRPVPRNGGKYCEGRRTRFRSCNTEDCP. Residues 686 to 837 are spacer; that stretch reads SKQSGSFRKF…LRRRPWVGRK (152 aa).

In terms of assembly, interacts with SRPX2. The cofactor is Zn(2+). The precursor is cleaved by a furin endopeptidase. In terms of processing, glycosylated. Can be O-fucosylated by POFUT2 on a serine or a threonine residue found within the consensus sequence C1-X(2)-(S/T)-C2-G of the TSP type-1 repeat domains where C1 and C2 are the first and second cysteine residue of the repeat, respectively. Fucosylated repeats can then be further glycosylated by the addition of a beta-1,3-glucose residue by the glucosyltransferase, B3GALTL. Fucosylation mediates the efficient secretion of ADAMTS family members. Can also be C-glycosylated with one or two mannose molecules on tryptophan residues within the consensus sequence W-X-X-W of the TPRs, and N-glycosylated. These other glycosylations can also facilitate secretion.

The protein localises to the secreted. It is found in the extracellular space. Its subcellular location is the extracellular matrix. It carries out the reaction Glutamyl endopeptidase. Bonds cleaved include 370-Thr-Glu-Gly-Glu-|-Ala-Arg-Gly-Ser-377 in the interglobular domain of mammalian aggrecan.. In terms of biological role, cleaves aggrecan, a cartilage proteoglycan, at the '392-Glu-|-Ala-393' site and may be involved in its turnover. Also cleaves COMP. May play an important role in the destruction of aggrecan in arthritic diseases. The chain is A disintegrin and metalloproteinase with thrombospondin motifs 4 (ADAMTS4) from Pongo abelii (Sumatran orangutan).